We begin with the raw amino-acid sequence, 237 residues long: 2,3-bisphosphoglycerate-dependent phosphoglycerate mutase (237 aa).

Substrate-binding positions include 8–15, 21–22, arginine 60, 87–90, lysine 98, 114–115, and 180–181; these read RHGQSQWN, TG, ERHY, RR, and GN. The active-site Tele-phosphohistidine intermediate is the histidine 9. Glutamate 87 acts as the Proton donor/acceptor in catalysis.

The protein belongs to the phosphoglycerate mutase family. BPG-dependent PGAM subfamily. In terms of assembly, homodimer.

The catalysed reaction is (2R)-2-phosphoglycerate = (2R)-3-phosphoglycerate. Its pathway is carbohydrate degradation; glycolysis; pyruvate from D-glyceraldehyde 3-phosphate: step 3/5. Functionally, catalyzes the interconversion of 2-phosphoglycerate and 3-phosphoglycerate. The protein is 2,3-bisphosphoglycerate-dependent phosphoglycerate mutase of Caulobacter vibrioides (strain ATCC 19089 / CIP 103742 / CB 15) (Caulobacter crescentus).